Reading from the N-terminus, the 450-residue chain is Phosphoglucosamine mutase (450 aa).

The active-site Phosphoserine intermediate is Ser101. Residues Ser101, Asp240, Asp242, and Asp244 each coordinate Mg(2+). Residue Ser101 is modified to Phosphoserine.

It belongs to the phosphohexose mutase family. Requires Mg(2+) as cofactor. Post-translationally, activated by phosphorylation.

It carries out the reaction alpha-D-glucosamine 1-phosphate = D-glucosamine 6-phosphate. Catalyzes the conversion of glucosamine-6-phosphate to glucosamine-1-phosphate. This is Phosphoglucosamine mutase from Streptococcus pneumoniae serotype 4 (strain ATCC BAA-334 / TIGR4).